We begin with the raw amino-acid sequence, 139 residues long: Histone H2AX (139 aa).

2 disordered regions span residues 1-21 and 119-139; these read MSGR…RSSR and KKSS…SQEY. S2 bears the N-acetylserine mark. The residue at position 2 (S2) is a Phosphoserine. The span at 7–19 shows a compositional bias: basic residues; sequence AVSKTRAKAKTRS. K10 bears the N6-lactoyllysine; alternate mark. Glycyl lysine isopeptide (Lys-Gly) (interchain with G-Cter in ubiquitin) cross-links involve residues K14, K16, and K120. S136 carries the post-translational modification Phosphoserine. The short motif at 136 to 137 is the [ST]-Q motif element; the sequence is SQ. Y139 carries the post-translational modification Phosphotyrosine; by WSTF.

Belongs to the histone H2A family. As to quaternary structure, the nucleosome is a histone octamer containing two molecules each of H2A, H2B, H3 and H4 assembled in one H3-H4 heterotetramer and two H2A-H2B heterodimers. The octamer wraps approximately 147 bp of DNA. Interacts with numerous proteins required for DNA damage signaling and repair when phosphorylated on Ser-136. Post-translationally, phosphorylated. Phosphorylation of Ser-136 (H2AX139ph) occurs in response to DNA double strand breaks (DSBs) generated by exogenous genotoxic agents, by stalled replication forks and by meiotic recombination events. Phosphorylation is dependent on the DNA damage checkpoint kinases ATR and ATM, spreads on either side of a detected DSB site and may mark the surrounding chromatin for recruitment of proteins required for DNA damage signaling and repair. Widespread phosphorylation may also serve to amplify the damage signal or aid repair of persistent lesions. Dephosphorylation of Ser-136 is required for DNA DSB repair. Phosphorylation at Tyr-139 (H2AXY142ph) by baz1b/wstf determines the relative recruitment of either DNA repair or pro-apoptotic factors. Phosphorylation at Tyr-139 (H2AXY142ph) favors the recruitment of pro-apoptosis factors. In contrast, dephosphorylation of Tyr-139 by EYA proteins (eya1, eya2, eya3 or eya4) favors the recruitment of MDC1-containing DNA repair complexes to the tail of phosphorylated Ser-136 (H2AX139ph). Phosphorylated by VRK1. In terms of processing, monoubiquitination of Lys-120 (H2AXK119ub) by ring1 and rnf2/ring2 complex gives a specific tag for epigenetic transcriptional repression. Following DNA double-strand breaks (DSBs), it is ubiquitinated through 'Lys-63' linkage of ubiquitin moieties by the E2 ligase ube2n and the E3 ligases rnf8 and rnf168, leading to the recruitment of repair proteins to sites of DNA damage. Ubiquitination at Lys-14 and Lys-16 (H2AK13Ub and H2AK15Ub, respectively) in response to DNA damage is initiated by rnf168 that mediates monoubiquitination at these 2 sites, and 'Lys-63'-linked ubiquitin are then conjugated to monoubiquitin; rnf8 is able to extend 'Lys-63'-linked ubiquitin chains in vitro. H2AK119Ub and ionizing radiation-induced 'Lys-63'-linked ubiquitination (H2AK13Ub and H2AK15Ub) are distinct events.

The protein localises to the nucleus. It is found in the chromosome. Its function is as follows. Variant histone H2A which replaces conventional H2A in a subset of nucleosomes. Nucleosomes wrap and compact DNA into chromatin, limiting DNA accessibility to the cellular machineries which require DNA as a template. Histones thereby play a central role in transcription regulation, DNA repair, DNA replication and chromosomal stability. DNA accessibility is regulated via a complex set of post-translational modifications of histones, also called histone code, and nucleosome remodeling. Required for checkpoint-mediated arrest of cell cycle progression in response to low doses of ionizing radiation and for efficient repair of DNA double strand breaks (DSBs) specifically when modified by C-terminal phosphorylation. The protein is Histone H2AX (h2ax) of Xenopus laevis (African clawed frog).